The following is a 212-amino-acid chain: Adenylate kinase (212 aa).

10–15 (GAGKGT) is an ATP binding site. The tract at residues 30-59 (AIGDIFRTIIKTSTSEAELINNYVRQGELI) is NMP. AMP is bound by residues R36, 57–59 (ELI), 85–88 (GYPR), and Q92. The tract at residues 122–160 (GRYSCKNCGKIYNRYFLQPKTDNVCDVCGSSTFDYRKDD) is LID. R123 serves as a coordination point for ATP. 2 residues coordinate Zn(2+): C126 and C129. Position 132 to 133 (132 to 133 (IY)) interacts with ATP. C146 and C149 together coordinate Zn(2+). The AMP site is built by R157 and R168. An ATP-binding site is contributed by K196.

It belongs to the adenylate kinase family. In terms of assembly, monomer.

The protein resides in the cytoplasm. It carries out the reaction AMP + ATP = 2 ADP. The protein operates within purine metabolism; AMP biosynthesis via salvage pathway; AMP from ADP: step 1/1. Functionally, catalyzes the reversible transfer of the terminal phosphate group between ATP and AMP. Plays an important role in cellular energy homeostasis and in adenine nucleotide metabolism. This Rickettsia rickettsii (strain Iowa) protein is Adenylate kinase.